A 554-amino-acid chain; its full sequence is DDB1- and CUL4-associated factor 11 homolog (554 aa).

Residues 24-52 (QRMKNRNDSDTDFSDDDEETSGGCPKMTP) are disordered. Over residues 33-43 (DTDFSDDDEET) the composition is skewed to acidic residues. WD repeat units lie at residues 245-284 (QNQC…RIRT), 288-328 (AHED…DGDV), 336-375 (GHRD…CQGG), 414-458 (GHSV…VSRR), and 461-500 (GHQA…EGVI). A disordered region spans residues 527–554 (PQRKLRKPISARNAKCPTTSSEPDDFQI).

The protein belongs to the WD repeat LEC14B family.

In terms of biological role, involved in regulation of lifespan. Required for dopaminergic CEP neuron degeneration in response to Mn(2+). The polypeptide is DDB1- and CUL4-associated factor 11 homolog (wdr-23) (Caenorhabditis briggsae).